A 328-amino-acid chain; its full sequence is Opticin (328 aa).

The N-terminal stretch at 1–19 (MKFLAFLSLLSLVLQKAET) is a signal peptide. N-linked (GlcNAc...) asparagine glycosylation occurs at Asn-46. Residue Tyr-69 is modified to Sulfotyrosine. N-linked (GlcNAc...) asparagine glycosylation is found at Asn-80 and Asn-101. Residues 112-149 (LLNSQSSHGLPTCLVCVCLGSSVYCDDADLENIPPLPQ) enclose the LRRNT domain. LRR repeat units follow at residues 150-171 (MTTYLYARFNHISHIQAGDFKG), 174-195 (KLRRIDLSGNSISSIHNDALRL), 198-219 (ALQDLILPENQLAALPVLPSGI), 244-265 (KLQFLYLANNMLDSIPGPLPLS), 266-286 (LRSLHLQNNMIETMESDTFCD), and 296-316 (QLEDIRLDGNPINLSLFPEAY). The cysteines at positions 285 and 318 are disulfide-linked. A glycan (N-linked (GlcNAc...) asparagine) is linked at Asn-308.

This sequence belongs to the small leucine-rich proteoglycan (SLRP) family. SLRP class III subfamily. As to quaternary structure, homodimer. O-glycosylated. Post-translationally, sulfated on tyrosine residues. In terms of processing, proteolytically cleaved by MMP1, MMP2, MMP3, MMP7, MMP8, MMP9, ADAMTS4, and ADAMTS5. Proteolytically cleaved by MMP13. As to expression, expressed in cartilage (at protein level). Expressed in the vitreous collagen, inner limiting membrane, lens capsule, trabecular meshwork, anterior surface of the iris, the area adjacent to the nonpigmented ciliary epithelium, and weakly expressed in the retina of the eye (at protein level). Expressed in the nonpigmented ciliary epithelium of the eye.

It is found in the secreted. The protein localises to the extracellular space. The protein resides in the extracellular matrix. Inhibits angiogenesis in the vitreous humor of the eye, and therefore represses neovascularization. Binds collagen fibrils. May be involved in collagen fiber organization via regulation of other members of the small leucine-rich repeat proteoglycan superfamily. The polypeptide is Opticin (Optc) (Mus musculus (Mouse)).